A 199-amino-acid chain; its full sequence is FMN-dependent NADH:quinone oxidoreductase (199 aa).

Residues serine 10, 16–18, and 96–99 each bind FMN; these read SVS and MYNF.

This sequence belongs to the azoreductase type 1 family. As to quaternary structure, homodimer. Requires FMN as cofactor.

The catalysed reaction is 2 a quinone + NADH + H(+) = 2 a 1,4-benzosemiquinone + NAD(+). It catalyses the reaction N,N-dimethyl-1,4-phenylenediamine + anthranilate + 2 NAD(+) = 2-(4-dimethylaminophenyl)diazenylbenzoate + 2 NADH + 2 H(+). Quinone reductase that provides resistance to thiol-specific stress caused by electrophilic quinones. Functionally, also exhibits azoreductase activity. Catalyzes the reductive cleavage of the azo bond in aromatic azo compounds to the corresponding amines. In Azotobacter vinelandii (strain DJ / ATCC BAA-1303), this protein is FMN-dependent NADH:quinone oxidoreductase.